The sequence spans 310 residues: Basic salivary proline-rich protein 4 (310 aa).

A signal peptide spans 1-16 (MLLILLSVALLALSSA). The disordered stretch occupies residues 14 to 310 (SSAESSSEDV…RPAQGQQPPQ (297 aa)). Tandem repeats lie at residues 35 to 55 (KPEG…PPPG), 56 to 76 (KPQG…PPPG), 77 to 97 (KPEG…PHPG), 98 to 118 (KPER…PHPG), 119 to 139 (KPES…PTPG), 140 to 160 (KPEG…PPPG), 161 to 181 (KPEG…PHPG), 182 to 202 (KPER…PPPG), and 203 to 223 (KPER…PHPG). Residues 35–234 (KPEGRRPQGG…PEGPPPQEGN (200 aa)) are 9.5 X 21 AA tandem repeats of K-P-[EQ]-[GR]-[PR]-[PR]-P-Q-G-G-N-Q-[PS]-[QH]-[RG]-[PT]-P-P-[PH]-P-G. Over residues 48-63 (QRPPPPPGKPQGPPPQ) the composition is skewed to pro residues. Asn66, Asn87, and Asn108 each carry an N-linked (GlcNAc...) asparagine glycan. Positions 133 to 147 (GPPPTPGKPEGPPPQ) are enriched in pro residues. Residues Asn150, Asn171, and Asn192 are each glycosylated (N-linked (GlcNAc...) asparagine). The span at 196–210 (RPPPPPGKPERPPPQ) shows a compositional bias: pro residues. N-linked (GlcNAc...) asparagine glycosylation occurs at Asn213. A compositionally biased stretch (pro residues) spans 217 to 231 (GPPPHPGKPEGPPPQ). The 10; truncated repeat unit spans residues 224 to 234 (KPEGPPPQEGN). N-linked (GlcNAc...) asparagine glycosylation occurs at Asn234. The segment covering 258–310 (QGPPPPGKPQGPPPAGGNPQQPQAPPAGKPQGPPPPPQGGRPPRPAQGQQPPQ) has biased composition (pro residues).

N-glycosylated. Post-translationally, proteolytically cleaved at the tripeptide Xaa-Pro-Gln, where Xaa in the P(3) position is mostly lysine. The endoprotease may be of microbial origin. Pyroglutamate formation found on at least Gln-46, Gln-48, Gln-67, Gln-88; Gln-90; Gln-193; Gln-288 Gln-214 and Gln-295, preferentially in diabetic, and head and neck cancer patients.

It is found in the secreted. The protein is Basic salivary proline-rich protein 4 (PRB4) of Homo sapiens (Human).